The sequence spans 245 residues: MREALQSLLVALQFLTRLPVRLSAMPTPEQFGRAVLCYPLVGVLIGVVLYGAARSLDGTPPLLQAALLLSLWVALSGALHLDGLADMADAWVGGLGDRERTLAIMKDPRSGPAAVVALVLVLLLKFGALAALLGAGRPGLLLLAPWLARSSLPLLFLTTPYARPGGLGQAIAEHLPARSLPWVLGVSFGLALAFGLSGLLALLVTLMLFAWLRSRFLARLGGTTGDTAGALVELTECAVLVALAL.

5 consecutive transmembrane segments (helical) span residues 31 to 51 (FGRA…VLYG), 61 to 81 (PLLQ…ALHL), 113 to 133 (AAVV…AALL), 138 to 158 (PGLL…LFLT), and 192 to 212 (LAFG…FAWL).

It belongs to the CobS family. Requires Mg(2+) as cofactor.

The protein resides in the cell inner membrane. It catalyses the reaction alpha-ribazole + adenosylcob(III)inamide-GDP = adenosylcob(III)alamin + GMP + H(+). The catalysed reaction is alpha-ribazole 5'-phosphate + adenosylcob(III)inamide-GDP = adenosylcob(III)alamin 5'-phosphate + GMP + H(+). The protein operates within cofactor biosynthesis; adenosylcobalamin biosynthesis; adenosylcobalamin from cob(II)yrinate a,c-diamide: step 7/7. Functionally, joins adenosylcobinamide-GDP and alpha-ribazole to generate adenosylcobalamin (Ado-cobalamin). Also synthesizes adenosylcobalamin 5'-phosphate from adenosylcobinamide-GDP and alpha-ribazole 5'-phosphate. This is Adenosylcobinamide-GDP ribazoletransferase from Pseudomonas paraeruginosa (strain DSM 24068 / PA7) (Pseudomonas aeruginosa (strain PA7)).